A 459-amino-acid polypeptide reads, in one-letter code: Cysteine--tRNA ligase (459 aa).

Cysteine 28 is a Zn(2+) binding site. The 'HIGH' region signature appears at 30–40; the sequence is VTIYDLCHIGH. Zn(2+) contacts are provided by cysteine 209, histidine 234, and glutamate 238. The short motif at 266-270 is the 'KMSKS' region element; it reads KMSKS. Lysine 269 serves as a coordination point for ATP.

This sequence belongs to the class-I aminoacyl-tRNA synthetase family. In terms of assembly, monomer. Zn(2+) serves as cofactor.

Its subcellular location is the cytoplasm. It catalyses the reaction tRNA(Cys) + L-cysteine + ATP = L-cysteinyl-tRNA(Cys) + AMP + diphosphate. The polypeptide is Cysteine--tRNA ligase (Shewanella baltica (strain OS155 / ATCC BAA-1091)).